We begin with the raw amino-acid sequence, 86 residues long: Omega-theraphotoxin-Hhn1f 4 (86 aa).

Residues 1–21 (MKSIVFVALFGLALLAVVCSA) form the signal peptide. Residues 22–50 (SEDAHKELLKEVVRAMVVDKTDAVQAGER) constitute a propeptide that is removed on maturation. 3 disulfides stabilise this stretch: Cys-52/Cys-66, Cys-59/Cys-71, and Cys-65/Cys-78.

Belongs to the neurotoxin 10 (Hwtx-1) family. 17 (Hntx-9) subfamily. As to expression, expressed by the venom gland.

The protein localises to the secreted. Ion channel inhibitor. This chain is Omega-theraphotoxin-Hhn1f 4, found in Cyriopagopus hainanus (Chinese bird spider).